The following is a 404-amino-acid chain: Cysteine desulfurase IscS (404 aa).

Pyridoxal 5'-phosphate is bound by residues 75 to 76 (AT), Asn155, Gln183, and 203 to 205 (TSH). At Lys206 the chain carries N6-(pyridoxal phosphate)lysine. Position 243 (Thr243) interacts with pyridoxal 5'-phosphate. The Cysteine persulfide intermediate role is filled by Cys328. Cys328 contributes to the [2Fe-2S] cluster binding site.

The protein belongs to the class-V pyridoxal-phosphate-dependent aminotransferase family. NifS/IscS subfamily. In terms of assembly, homodimer. Forms a heterotetramer with IscU, interacts with other sulfur acceptors. It depends on pyridoxal 5'-phosphate as a cofactor.

The protein resides in the cytoplasm. It carries out the reaction (sulfur carrier)-H + L-cysteine = (sulfur carrier)-SH + L-alanine. Its pathway is cofactor biosynthesis; iron-sulfur cluster biosynthesis. Its function is as follows. Master enzyme that delivers sulfur to a number of partners involved in Fe-S cluster assembly, tRNA modification or cofactor biosynthesis. Catalyzes the removal of elemental sulfur atoms from cysteine to produce alanine. Functions as a sulfur delivery protein for Fe-S cluster synthesis onto IscU, an Fe-S scaffold assembly protein, as well as other S acceptor proteins. The chain is Cysteine desulfurase IscS from Photobacterium profundum (strain SS9).